The following is a 315-amino-acid chain: Acetyl-coenzyme A carboxylase carboxyl transferase subunit alpha (315 aa).

A CoA carboxyltransferase C-terminal domain is found at 35–289; it reads KLSKKRFELM…RKAVAAELKI (255 aa).

Belongs to the AccA family. In terms of assembly, acetyl-CoA carboxylase is a heterohexamer composed of biotin carboxyl carrier protein (AccB), biotin carboxylase (AccC) and two subunits each of ACCase subunit alpha (AccA) and ACCase subunit beta (AccD).

The protein localises to the cytoplasm. The enzyme catalyses N(6)-carboxybiotinyl-L-lysyl-[protein] + acetyl-CoA = N(6)-biotinyl-L-lysyl-[protein] + malonyl-CoA. It participates in lipid metabolism; malonyl-CoA biosynthesis; malonyl-CoA from acetyl-CoA: step 1/1. Its function is as follows. Component of the acetyl coenzyme A carboxylase (ACC) complex. First, biotin carboxylase catalyzes the carboxylation of biotin on its carrier protein (BCCP) and then the CO(2) group is transferred by the carboxyltransferase to acetyl-CoA to form malonyl-CoA. This chain is Acetyl-coenzyme A carboxylase carboxyl transferase subunit alpha, found in Francisella tularensis subsp. mediasiatica (strain FSC147).